An 869-amino-acid polypeptide reads, in one-letter code: Probable beta-glucosidase F (869 aa).

The N-terminal stretch at 1-19 (MRVLSAIALVASLASSALS) is a signal peptide. 2 N-linked (GlcNAc...) asparagine glycosylation sites follow: asparagine 77 and asparagine 261. Aspartate 289 is an active-site residue. 4 N-linked (GlcNAc...) asparagine glycosylation sites follow: asparagine 332, asparagine 364, asparagine 399, and asparagine 478. Positions 677–697 (STYPPTRPPKGPTPTYPTAIP) are disordered. Positions 681 to 691 (PTRPPKGPTPT) are enriched in pro residues. Residue asparagine 728 is glycosylated (N-linked (GlcNAc...) asparagine).

This sequence belongs to the glycosyl hydrolase 3 family.

It localises to the secreted. It catalyses the reaction Hydrolysis of terminal, non-reducing beta-D-glucosyl residues with release of beta-D-glucose.. Its pathway is glycan metabolism; cellulose degradation. Its function is as follows. Beta-glucosidases are one of a number of cellulolytic enzymes involved in the degradation of cellulosic biomass. Catalyzes the last step releasing glucose from the inhibitory cellobiose. This chain is Probable beta-glucosidase F (bglF), found in Aspergillus fumigatus (strain CBS 144.89 / FGSC A1163 / CEA10) (Neosartorya fumigata).